The chain runs to 422 residues: 3-phosphoshikimate 1-carboxyvinyltransferase (422 aa).

Positions 20, 21, and 25 each coordinate 3-phosphoshikimate. Lys-20 is a phosphoenolpyruvate binding site. Gly-90 and Arg-118 together coordinate phosphoenolpyruvate. Ser-161, Ser-162, Gln-163, Ser-189, Asp-305, and Lys-332 together coordinate 3-phosphoshikimate. Gln-163 is a binding site for phosphoenolpyruvate. The active-site Proton acceptor is the Asp-305. Positions 336 and 378 each coordinate phosphoenolpyruvate.

This sequence belongs to the EPSP synthase family. In terms of assembly, monomer.

The protein localises to the cytoplasm. It catalyses the reaction 3-phosphoshikimate + phosphoenolpyruvate = 5-O-(1-carboxyvinyl)-3-phosphoshikimate + phosphate. It participates in metabolic intermediate biosynthesis; chorismate biosynthesis. Functionally, catalyzes the transfer of the enolpyruvyl moiety of phosphoenolpyruvate (PEP) to the 5-hydroxyl of shikimate-3-phosphate (S3P) to produce enolpyruvyl shikimate-3-phosphate and inorganic phosphate. This is 3-phosphoshikimate 1-carboxyvinyltransferase from Nitrosopumilus maritimus (strain SCM1).